The sequence spans 625 residues: TORTIFOLIA1-like protein 4 (625 aa).

A disordered region spans residues M1–D34. Low complexity predominate over residues P12–P29. HEAT repeat units follow at residues D69–D106, P110–R147, P149–D186, E190–A227, and K230–L268. The segment at S391–E466 is disordered. 3 stretches are compositionally biased toward basic and acidic residues: residues K404–A413, I420–K434, and D455–E466. S475 is subject to Phosphoserine. The segment at G582–T625 is disordered. A compositionally biased stretch (polar residues) spans M612–T625.

This Arabidopsis thaliana (Mouse-ear cress) protein is TORTIFOLIA1-like protein 4.